Consider the following 292-residue polypeptide: Nitrogenase iron protein 2 (292 aa).

12–19 (GKGGIGKS) lines the ATP pocket. Residue Cys-97 participates in [4Fe-4S] cluster binding. Arg-100 bears the ADP-ribosylarginine; by dinitrogenase reductase ADP-ribosyltransferase mark. Residue Cys-133 participates in [4Fe-4S] cluster binding.

Belongs to the NifH/BchL/ChlL family. Homodimer. [4Fe-4S] cluster is required as a cofactor. The reversible ADP-ribosylation of Arg-100 inactivates the nitrogenase reductase and regulates nitrogenase activity.

The enzyme catalyses N2 + 8 reduced [2Fe-2S]-[ferredoxin] + 16 ATP + 16 H2O = H2 + 8 oxidized [2Fe-2S]-[ferredoxin] + 2 NH4(+) + 16 ADP + 16 phosphate + 6 H(+). The key enzymatic reactions in nitrogen fixation are catalyzed by the nitrogenase complex, which has 2 components: the iron protein and the molybdenum-iron protein. The polypeptide is Nitrogenase iron protein 2 (nifH2) (Paenibacillus durus (Paenibacillus azotofixans)).